Consider the following 812-residue polypeptide: Probable inorganic carbon transporter subunit DabA (812 aa).

Residues cysteine 337, aspartate 339, histidine 499, and cysteine 514 each coordinate Zn(2+).

Belongs to the inorganic carbon transporter (TC 9.A.2) DabA family. As to quaternary structure, forms a complex with DabB. The cofactor is Zn(2+).

It localises to the cell inner membrane. Part of an energy-coupled inorganic carbon pump. This Xanthomonas oryzae pv. oryzae (strain MAFF 311018) protein is Probable inorganic carbon transporter subunit DabA.